A 225-amino-acid polypeptide reads, in one-letter code: Probable polyketide biosynthesis zinc-dependent hydrolase BaeB (225 aa).

Zn(2+) contacts are provided by histidine 62, histidine 64, aspartate 66, histidine 67, histidine 123, aspartate 140, and histidine 181.

Belongs to the metallo-beta-lactamase superfamily. Zn(2+) serves as cofactor.

The protein resides in the cytoplasm. It functions in the pathway antibiotic biosynthesis; bacillaene biosynthesis. Functionally, probably involved in some intermediate steps for the synthesis of the antibiotic polyketide bacillaene which is involved in secondary metabolism. This Bacillus velezensis (strain DSM 23117 / BGSC 10A6 / LMG 26770 / FZB42) (Bacillus amyloliquefaciens subsp. plantarum) protein is Probable polyketide biosynthesis zinc-dependent hydrolase BaeB (baeB).